The sequence spans 221 residues: Ktr system potassium uptake protein C (221 aa).

Residues Lys2 to Val118 form the RCK N-terminal domain. NAD(+) is bound by residues Arg12, Asp32–Asp34, Asp52–Ser53, Ile74–Glu76, Lys99–Gln101, His105, and Glu121. The 85-residue stretch at Asn135–His219 folds into the RCK C-terminal domain.

It belongs to the KtrA potassium transport family. In terms of assembly, homodimer, tetramer (dimer of homodimer) and octamer (tetramer of homodimer). Part of the KtrCD complex formed by an octameric catalytic ring of KtrC and a membrane associated dimer of KtrD forming a potassium channel.

The protein localises to the cell membrane. Its function is as follows. Catalytic subunit of the KtrCD potassium uptake transporter. The 2 major potassium transporter complexes KtrAB and KtrCD confer resistance to both suddenly imposed and prolonged osmotic stress. The sequence is that of Ktr system potassium uptake protein C (ktrC) from Bacillus subtilis (strain 168).